The chain runs to 276 residues: Digeranylgeranylglyceryl phosphate synthase (276 aa).

The next 5 helical transmembrane spans lie at 14–34, 90–110, 144–164, 200–220, and 221–241; these read VNTL…GGAV, VVLF…AVCI, FVFG…AALA, ALAV…VPYL, and VGVF…VMVV.

It belongs to the UbiA prenyltransferase family. DGGGP synthase subfamily. The cofactor is Mg(2+).

The protein localises to the cell membrane. The catalysed reaction is sn-3-O-(geranylgeranyl)glycerol 1-phosphate + (2E,6E,10E)-geranylgeranyl diphosphate = 2,3-bis-O-(geranylgeranyl)-sn-glycerol 1-phosphate + diphosphate. The protein operates within membrane lipid metabolism; glycerophospholipid metabolism. Its function is as follows. Prenyltransferase that catalyzes the transfer of the geranylgeranyl moiety of geranylgeranyl diphosphate (GGPP) to the C2 hydroxyl of (S)-3-O-geranylgeranylglyceryl phosphate (GGGP). This reaction is the second ether-bond-formation step in the biosynthesis of archaeal membrane lipids. This chain is Digeranylgeranylglyceryl phosphate synthase, found in Halobacterium salinarum (strain ATCC 29341 / DSM 671 / R1).